Reading from the N-terminus, the 427-residue chain is Serine--tRNA ligase (427 aa).

231 to 233 (TAE) is a binding site for L-serine. 262-264 (RSE) is an ATP binding site. E285 contributes to the L-serine binding site. 349–352 (EISS) provides a ligand contact to ATP. S385 is a binding site for L-serine.

This sequence belongs to the class-II aminoacyl-tRNA synthetase family. Type-1 seryl-tRNA synthetase subfamily. As to quaternary structure, homodimer. The tRNA molecule binds across the dimer.

It localises to the cytoplasm. It catalyses the reaction tRNA(Ser) + L-serine + ATP = L-seryl-tRNA(Ser) + AMP + diphosphate + H(+). The enzyme catalyses tRNA(Sec) + L-serine + ATP = L-seryl-tRNA(Sec) + AMP + diphosphate + H(+). It participates in aminoacyl-tRNA biosynthesis; selenocysteinyl-tRNA(Sec) biosynthesis; L-seryl-tRNA(Sec) from L-serine and tRNA(Sec): step 1/1. Its function is as follows. Catalyzes the attachment of serine to tRNA(Ser). Is also able to aminoacylate tRNA(Sec) with serine, to form the misacylated tRNA L-seryl-tRNA(Sec), which will be further converted into selenocysteinyl-tRNA(Sec). This is Serine--tRNA ligase from Exiguobacterium sp. (strain ATCC BAA-1283 / AT1b).